Reading from the N-terminus, the 172-residue chain is Peptide methionine sulfoxide reductase MsrA (172 aa).

Cysteine 14 is a catalytic residue.

Belongs to the MsrA Met sulfoxide reductase family.

It carries out the reaction L-methionyl-[protein] + [thioredoxin]-disulfide + H2O = L-methionyl-(S)-S-oxide-[protein] + [thioredoxin]-dithiol. The enzyme catalyses [thioredoxin]-disulfide + L-methionine + H2O = L-methionine (S)-S-oxide + [thioredoxin]-dithiol. Its function is as follows. Has an important function as a repair enzyme for proteins that have been inactivated by oxidation. Catalyzes the reversible oxidation-reduction of methionine sulfoxide in proteins to methionine. The chain is Peptide methionine sulfoxide reductase MsrA from Streptomyces coelicolor (strain ATCC BAA-471 / A3(2) / M145).